The sequence spans 305 residues: tRNA uridine(34) hydroxylase (305 aa).

Positions 130–228 (DDPDTLVIDT…YLGEIPEQES (99 aa)) constitute a Rhodanese domain. Cys188 acts as the Cysteine persulfide intermediate in catalysis.

This sequence belongs to the TrhO family.

It carries out the reaction uridine(34) in tRNA + AH2 + O2 = 5-hydroxyuridine(34) in tRNA + A + H2O. Functionally, catalyzes oxygen-dependent 5-hydroxyuridine (ho5U) modification at position 34 in tRNAs. This Synechococcus sp. (strain CC9902) protein is tRNA uridine(34) hydroxylase.